Here is a 374-residue protein sequence, read N- to C-terminus: tRNA (adenine(58)-N(1))-methyltransferase catalytic subunit TRM61 (374 aa).

S-adenosyl-L-methionine is bound by residues 120-122 (SGS), Glu138, Arg143, 167-168 (DV), and Asp202.

Belongs to the class I-like SAM-binding methyltransferase superfamily. TRM61 family. In terms of assembly, heterotetramer; composed of two copies of TRM6 and two copies of TRM61.

Its subcellular location is the nucleus. The catalysed reaction is adenosine(58) in tRNA + S-adenosyl-L-methionine = N(1)-methyladenosine(58) in tRNA + S-adenosyl-L-homocysteine + H(+). Catalytic subunit of tRNA (adenine-N(1)-)-methyltransferase, which catalyzes the formation of N(1)-methyladenine at position 58 (m1A58) in initiator methionyl-tRNA. This chain is tRNA (adenine(58)-N(1))-methyltransferase catalytic subunit TRM61 (TRM61), found in Candida glabrata (strain ATCC 2001 / BCRC 20586 / JCM 3761 / NBRC 0622 / NRRL Y-65 / CBS 138) (Yeast).